The primary structure comprises 491 residues: MAQKTLLIITDGIGYRKDSDHNAFFHAKKPTYDLMFKTLPYSLIDTHGLSVGLPKGQMGNSEVGHMCIGAGRVLYQDLVRISLSLQNDELKNNPAFLNTIQKSHVVHLMGLMSDGGVHSHIEHFIALALECEKSHKKVCLHLITDGRDVAPKSALTYLKQMQNICNENIQIATISGRFYAMDRDNRFERIELAYNSLMGLNHTPLSPSEYIQSQYDKNITDEFIIPACFKNYCGMQDDESFIFINFRNDRAREIVSALGQKEFNSFKRQAFKKLHIATMTPYDNSFPYPVLFPKESVQNTLAEVVSQHNLTQSHIAETEKYAHVTFFINGGVETPFKNENRVLIQSPKVTTYDLKPEMSAKGVTLAVLEQMRLGTDLIIVNFANGDMVGHTGNFEASIKAVEAVDACLGEILSLAKELDYAMLLTSDHGNCERMKDENQNPLTNHTAGSVYCFVLGNGVKSIKNGALNNIASSVLKLMGIKAPATMDEPLF.

Asp-11 and Ser-61 together coordinate Mn(2+). Residue Ser-61 is the Phosphoserine intermediate of the active site. Substrate-binding positions include His-118, 147–148 (RD), Arg-177, Arg-183, 247–250 (RNDR), and Lys-320. Residues Asp-386, His-390, Asp-427, His-428, and His-445 each contribute to the Mn(2+) site.

The protein belongs to the BPG-independent phosphoglycerate mutase family. Monomer. Mn(2+) serves as cofactor.

It catalyses the reaction (2R)-2-phosphoglycerate = (2R)-3-phosphoglycerate. It participates in carbohydrate degradation; glycolysis; pyruvate from D-glyceraldehyde 3-phosphate: step 3/5. Catalyzes the interconversion of 2-phosphoglycerate and 3-phosphoglycerate. The polypeptide is 2,3-bisphosphoglycerate-independent phosphoglycerate mutase (Helicobacter pylori (strain J99 / ATCC 700824) (Campylobacter pylori J99)).